The sequence spans 559 residues: Potassium-transporting ATPase potassium-binding subunit (559 aa).

Helical transmembrane passes span 5–25, 27–47, 63–83, 132–152, 170–190, 253–273, 283–303, 327–347, 356–376, 379–399, 416–436, 484–504, and 524–544; these read GFLL…PLGS, LARL…RILW, LLAL…LLFW, GLTV…FALI, LVRI…LFFI, LAQM…FGEA, LLWA…WAEV, FGVL…CGAV, ALGG…FGGV, GLYG…LMIG, MTAL…ALAM, LLAF…MAIA, and GALF…LTFI.

It belongs to the KdpA family. As to quaternary structure, the system is composed of three essential subunits: KdpA, KdpB and KdpC.

Its subcellular location is the cell inner membrane. Functionally, part of the high-affinity ATP-driven potassium transport (or Kdp) system, which catalyzes the hydrolysis of ATP coupled with the electrogenic transport of potassium into the cytoplasm. This subunit binds the periplasmic potassium ions and delivers the ions to the membrane domain of KdpB through an intramembrane tunnel. This Salmonella dublin (strain CT_02021853) protein is Potassium-transporting ATPase potassium-binding subunit.